The sequence spans 307 residues: F-box protein At2g23160 (307 aa).

Residues 2-49 form the F-box domain; it reads NSSSPISIDLIAEILSRVPSKSVARFRCVSKPWASMIRRPYFTELFLT.

The chain is F-box protein At2g23160 from Arabidopsis thaliana (Mouse-ear cress).